The chain runs to 231 residues: Orotidine 5'-phosphate decarboxylase (231 aa).

Substrate-binding positions include aspartate 11, lysine 33, 60 to 69 (DLKFHDIPNT), threonine 120, arginine 181, glutamine 190, glycine 210, and arginine 211. Lysine 62 functions as the Proton donor in the catalytic mechanism.

This sequence belongs to the OMP decarboxylase family. Type 1 subfamily. Homodimer.

The catalysed reaction is orotidine 5'-phosphate + H(+) = UMP + CO2. The protein operates within pyrimidine metabolism; UMP biosynthesis via de novo pathway; UMP from orotate: step 2/2. In terms of biological role, catalyzes the decarboxylation of orotidine 5'-monophosphate (OMP) to uridine 5'-monophosphate (UMP). The chain is Orotidine 5'-phosphate decarboxylase from Vibrio cholerae serotype O1 (strain ATCC 39315 / El Tor Inaba N16961).